We begin with the raw amino-acid sequence, 410 residues long: Protein CNPPD1 (410 aa).

Residues 233-253 form a helical membrane-spanning segment; the sequence is CLLAVAYVSSVALAVASVAVI.

It belongs to the CNPPD1 family.

It localises to the membrane. The sequence is that of Protein CNPPD1 (CNPPD1) from Pongo abelii (Sumatran orangutan).